Reading from the N-terminus, the 712-residue chain is Transcriptional regulator GZF3 (712 aa).

The segment covering 1–13 (MSMSDIQQRPQIP) has biased composition (polar residues). 5 disordered regions span residues 1–20 (MSMS…TAAV), 27–135 (NVNT…GPVC), 173–280 (SLKT…HHHL), 377–533 (DVSS…GNNF), and 596–712 (LNNN…KVKI). Composition is skewed to low complexity over residues 27 to 84 (NVNT…EQSS) and 107 to 131 (PKTG…ISMS). The GATA-type zinc finger occupies 135–159 (CGNCQTQTTPLWRRDETGQVLCNAC). Low complexity predominate over residues 186–199 (KQNGSNSQSSKSSG). Over residues 213–223 (GKKSPKSKKKS) the composition is skewed to basic residues. A compositionally biased stretch (polar residues) spans 246–261 (ATSNNTPTFKSTTSQS). Positions 268-280 (NHHHQHHNHHHHL) are enriched in basic residues. Residues 379–414 (SSINGSSTSLSSSSASSSIFSSVAPSTSSSSSLSNG) show a composition bias toward low complexity. Polar residues-rich tracts occupy residues 429-447 (SKIS…TPLQ) and 484-498 (QQSM…RSPI). Composition is skewed to low complexity over residues 499–532 (NGNQ…NGNN) and 596–616 (LNNN…QPQQ). Residues 545–598 (TRISELELVNDLYRTRIMELEAMEQAARLRENSMKKRLDEVMNLQINYQNLLNN) are a coiled coil. The segment covering 631–667 (DQGSQSISPNVSITGSTTITSPNSRSKIISETTPTHH) has biased composition (polar residues).

It is found in the nucleus. Probable transcription factor involved in response to fluconazole, LiCl, and copper. The sequence is that of Transcriptional regulator GZF3 (GZF3) from Candida albicans (strain SC5314 / ATCC MYA-2876) (Yeast).